The chain runs to 1142 residues: Serine/threonine-protein kinase GIN4 (1142 aa).

The 271-residue stretch at 19-289 (WKLGETLGLG…TRDILKHPLL (271 aa)) folds into the Protein kinase domain. ATP is bound by residues 25–33 (LGLGSTGKV) and K48. D156 (proton acceptor) is an active-site residue. Disordered stretches follow at residues 378–412 (KKRQ…SVTS) and 425–469 (ASSA…RNKR). Low complexity predominate over residues 382 to 395 (SISSVSVSPSKKVS). S406 is modified (phosphoserine). Residues 425 to 440 (ASSASSSNLTTPGSSK) show a composition bias toward low complexity. The span at 441-452 (RLSKNFSSKKKL) shows a compositional bias: basic residues. Polar residues predominate over residues 454–465 (TIVNQSSPTPAS). 8 positions are modified to phosphoserine: S465, S471, S617, S689, S719, S805, S807, and S883. A disordered region spans residues 676-698 (DPGIMFSSPTEEVSPVEPKRTEN). T884 bears the Phosphothreonine mark. The interval 903 to 1031 (NEAKQTDNLH…NTAIGNGSFF (129 aa)) is disordered. 3 stretches are compositionally biased toward basic and acidic residues: residues 923–937 (NELR…DQAH), 962–984 (KEEK…KVVD), and 996–1021 (KIRE…KQDK). Phosphoserine is present on S930.

This sequence belongs to the protein kinase superfamily. CAMK Ser/Thr protein kinase family. NIM1 subfamily. Component of the GIN4 complex composed of at least BNI5, CDC3, CDC10, CDC11, CDC12, GIN4, NAP1 and SHS1 which forms a ring at the bud neck.

It localises to the cytoplasm. Its subcellular location is the bud neck. It carries out the reaction L-seryl-[protein] + ATP = O-phospho-L-seryl-[protein] + ADP + H(+). The catalysed reaction is L-threonyl-[protein] + ATP = O-phospho-L-threonyl-[protein] + ADP + H(+). Serine/threonine-protein kinase which regulates the localization and the function of the septins during mitosis. Phosphorylates SHS1. This chain is Serine/threonine-protein kinase GIN4 (GIN4), found in Saccharomyces cerevisiae (strain ATCC 204508 / S288c) (Baker's yeast).